The following is a 173-amino-acid chain: Adenine phosphoribosyltransferase (173 aa).

This sequence belongs to the purine/pyrimidine phosphoribosyltransferase family. In terms of assembly, homodimer.

It localises to the cytoplasm. The catalysed reaction is AMP + diphosphate = 5-phospho-alpha-D-ribose 1-diphosphate + adenine. It functions in the pathway purine metabolism; AMP biosynthesis via salvage pathway; AMP from adenine: step 1/1. In terms of biological role, catalyzes a salvage reaction resulting in the formation of AMP, that is energically less costly than de novo synthesis. In Desulfosudis oleivorans (strain DSM 6200 / JCM 39069 / Hxd3) (Desulfococcus oleovorans), this protein is Adenine phosphoribosyltransferase.